The primary structure comprises 985 residues: MTKKRVHELAKELNIENKELINKLMQIGISVKSHMSALENDAVEKVYHQYGKKQEKSSDSANKQIQREHGRGQGMEDKKEKDQLFRPDNAKGPGLVDRVPNRPPDRRYEDKAKVAQKPAQELRGSKTTTNSENEQTAPRQGSAQQSGQGRPQANRPQGSQGRPYGGRPQGGQSRPYGDRPQGGQGRPYGDRPQGGQGRPYGDRPQGGQGRPYGDRPQGGQGRPYGDRPQGGQGRPYGDRPQGGQGRPYGDRPQGGQSRPYGDRPQGGQGRPYGDRPQGGQSRPYGDRPQGGQGRPYGDRPQGGQGRHYGDRPQGGQGRPQGAGRPGANRGAGPSIPKPPEQVAQPKPTKAPDKTKGDRRKNYEKDGKWADGQIEKNKLFKGRNNKNKKRQHQQSAPPPILDKKPVQIAEVITVQELAEKLKKTAAEVIKKLMGLGVLATINQEVDFETATLIAGEYGIETELKVAVDKEALVMAEPEEDEDKLVLRPPVVTIMGHVDHGKTSLLDAIRETNVTAGEAGGITQHIGAYQVERNGKKITFVDTPGHAAFTSMRARGAQITDIAILVVAADDGVMPQTIEAINHAKAANVPIIVAINKMDKPDANPDKVKQELTQHELVVEDWGGDVIAVPVSAKNRTGLDNLLEMILLVAEVHELKANPDRMARGTVVEAELDKGRGPVATVLVQNGTLNVGDTIVVGQVSGRVRAMIDDKGRRVKKAPPSTPVEILGLSDVPEAGDILVAVEDEKLARDVAEKRKIRKREEGLKSSTKISLDDLFKHIQEGQIKELPIIVKADVQGSIEALAQALEKLTTEEVKVNLIHTGVGAVNETDIMLATASNAIVIGFNVRPDNNARKLADAEKVDINLYRVIYEVIDDVKKAMSGLLDPEFKEVVLGHVEVRKTFKASKIGTIAGGYVTEGKIVRDASVRVIRDGIVVFEGKLDSLKRFKDDAKEVAQGYECGLTIDRFNDVQEGDIIEAFTMEAIKREI.

Composition is skewed to basic and acidic residues over residues 49 to 58 (QYGKKQEKSS), 65 to 89 (IQREHGRGQGMEDKKEKDQLFRPDN), and 99 to 113 (VPNRPPDRRYEDKAK). The interval 49-401 (QYGKKQEKSS…QQSAPPPILD (353 aa)) is disordered. Positions 125–136 (SKTTTNSENEQT) are enriched in polar residues. Residues 137–162 (APRQGSAQQSGQGRPQANRPQGSQGR) are compositionally biased toward low complexity. 2 stretches are compositionally biased toward gly residues: residues 180–246 (PQGG…GQGR) and 288–324 (PQGGQGRPYGDRPQGGQGRHYGDRPQGGQGRPQGAGR). Basic and acidic residues predominate over residues 349-377 (KAPDKTKGDRRKNYEKDGKWADGQIEKNK). Over residues 378–391 (LFKGRNNKNKKRQH) the composition is skewed to basic residues. The tr-type G domain occupies 485-654 (LRPPVVTIMG…LLVAEVHELK (170 aa)). The tract at residues 494 to 501 (GHVDHGKT) is G1. 494–501 (GHVDHGKT) lines the GTP pocket. The interval 519-523 (GITQH) is G2. The segment at 540–543 (DTPG) is G3. GTP contacts are provided by residues 540 to 544 (DTPGH) and 594 to 597 (NKMD). Positions 594-597 (NKMD) are G4. The G5 stretch occupies residues 630-632 (SAK).

This sequence belongs to the TRAFAC class translation factor GTPase superfamily. Classic translation factor GTPase family. IF-2 subfamily.

Its subcellular location is the cytoplasm. Functionally, one of the essential components for the initiation of protein synthesis. Protects formylmethionyl-tRNA from spontaneous hydrolysis and promotes its binding to the 30S ribosomal subunits. Also involved in the hydrolysis of GTP during the formation of the 70S ribosomal complex. The chain is Translation initiation factor IF-2 from Desulforamulus reducens (strain ATCC BAA-1160 / DSM 100696 / MI-1) (Desulfotomaculum reducens).